The following is a 120-amino-acid chain: NAD(P)H-quinone oxidoreductase subunit 3, chloroplastic (120 aa).

Helical transmembrane passes span 9–29, 64–84, and 88–108; these read IFWAFLIISSLIPILAFFISG, MFALVFVVFDVETVFLYPWAM, and VLGLSVFLEAFVFVLILIVGL.

It belongs to the complex I subunit 3 family. As to quaternary structure, NDH is composed of at least 16 different subunits, 5 of which are encoded in the nucleus.

It is found in the plastid. The protein resides in the chloroplast thylakoid membrane. It catalyses the reaction a plastoquinone + NADH + (n+1) H(+)(in) = a plastoquinol + NAD(+) + n H(+)(out). The catalysed reaction is a plastoquinone + NADPH + (n+1) H(+)(in) = a plastoquinol + NADP(+) + n H(+)(out). Its function is as follows. NDH shuttles electrons from NAD(P)H:plastoquinone, via FMN and iron-sulfur (Fe-S) centers, to quinones in the photosynthetic chain and possibly in a chloroplast respiratory chain. The immediate electron acceptor for the enzyme in this species is believed to be plastoquinone. Couples the redox reaction to proton translocation, and thus conserves the redox energy in a proton gradient. The chain is NAD(P)H-quinone oxidoreductase subunit 3, chloroplastic from Jasminum nudiflorum (Winter jasmine).